An 87-amino-acid polypeptide reads, in one-letter code: Small ribosomal subunit protein uS17 (87 aa).

It belongs to the universal ribosomal protein uS17 family. In terms of assembly, part of the 30S ribosomal subunit.

Functionally, one of the primary rRNA binding proteins, it binds specifically to the 5'-end of 16S ribosomal RNA. This chain is Small ribosomal subunit protein uS17, found in Heliobacterium modesticaldum (strain ATCC 51547 / Ice1).